The primary structure comprises 573 residues: Splicing factor U2af large subunit B (573 aa).

The segment covering 1 to 12 has biased composition (acidic residues); that stretch reads MPDYEGNGEDID. Residues 1 to 187 form a disordered region; that stretch reads MPDYEGNGED…DMAPPTSAML (187 aa). Residues 38–145 are compositionally biased toward basic and acidic residues; that stretch reads SDSKSQHSSR…QREHAKDRES (108 aa). Residues 161–173 show a composition bias toward basic residues; the sequence is SRSRSRSRSKSKR. RRM domains follow at residues 239 to 322, 359 to 437, and 478 to 564; these read RRVY…RPSD, DRIF…RANQ, and EVIS…YPEN.

Belongs to the splicing factor SR family. In terms of tissue distribution, expressed in stems, leaves and apical buds.

The protein localises to the nucleus. Its function is as follows. Necessary for the splicing of pre-mRNA. Binds to the U -enriched regions of plant introns. The chain is Splicing factor U2af large subunit B (U2AF65B) from Nicotiana plumbaginifolia (Leadwort-leaved tobacco).